A 347-amino-acid chain; its full sequence is NHL repeat-containing protein 3 (347 aa).

The first 25 residues, 1–25 (MARFWVCVAGAGFFLAFLVLHSRFC), serve as a signal peptide directing secretion. N-linked (GlcNAc...) asparagine glycosylation is present at asparagine 32. Residues 47 to 93 (RLDVGWPKHPEYFTGTTFCVAVDSLNGLVYIGQRGDNIPKILVFTED) form an NHL 1 repeat. Residue asparagine 101 is glycosylated (N-linked (GlcNAc...) asparagine). NHL repeat units lie at residues 150-196 (TPGK…LSQD) and 200-243 (LWLH…FDKD). Residues asparagine 206 and asparagine 278 are each glycosylated (N-linked (GlcNAc...) asparagine). One copy of the NHL 4 repeat lies at 294–338 (GECSVISTIQLADQVLPHLLEVDRKTGAVYVAEIGAKQVQKYVPL).

The protein resides in the secreted. The chain is NHL repeat-containing protein 3 (NHLRC3) from Homo sapiens (Human).